We begin with the raw amino-acid sequence, 295 residues long: Tyrosine recombinase XerC (295 aa).

A Core-binding (CB) domain is found at 1–85; sequence MLTALNRYWD…ALRRFLSFLV (85 aa). Positions 106-285 constitute a Tyr recombinase domain; that stretch reads HLPKNMDGEQ…NFQHLAEVYD (180 aa). Active-site residues include R145, K169, H237, R240, and H263. The active-site O-(3'-phospho-DNA)-tyrosine intermediate is the Y272.

It belongs to the 'phage' integrase family. XerC subfamily. In terms of assembly, forms a cyclic heterotetrameric complex composed of two molecules of XerC and two molecules of XerD.

The protein localises to the cytoplasm. Site-specific tyrosine recombinase, which acts by catalyzing the cutting and rejoining of the recombining DNA molecules. The XerC-XerD complex is essential to convert dimers of the bacterial chromosome into monomers to permit their segregation at cell division. It also contributes to the segregational stability of plasmids. This chain is Tyrosine recombinase XerC, found in Haemophilus influenzae (strain PittEE).